Consider the following 270-residue polypeptide: Carboxy-S-adenosyl-L-methionine synthase (270 aa).

Residues tyrosine 65, 90–92 (GCS), 143–144 (DI), asparagine 158, and arginine 225 contribute to the S-adenosyl-L-methionine site.

This sequence belongs to the class I-like SAM-binding methyltransferase superfamily. Cx-SAM synthase family. Homodimer.

It catalyses the reaction prephenate + S-adenosyl-L-methionine = carboxy-S-adenosyl-L-methionine + 3-phenylpyruvate + H2O. Its function is as follows. Catalyzes the conversion of S-adenosyl-L-methionine (SAM) to carboxy-S-adenosyl-L-methionine (Cx-SAM). This chain is Carboxy-S-adenosyl-L-methionine synthase, found in Chromohalobacter salexigens (strain ATCC BAA-138 / DSM 3043 / CIP 106854 / NCIMB 13768 / 1H11).